A 453-amino-acid polypeptide reads, in one-letter code: UDP-glycosyltransferase 79B3 (453 aa).

UDP-alpha-D-glucose is bound by residues serine 266, 325–327 (VQQ), 342–350 (HCGFGSMWE), and 364–367 (LGDQ).

It belongs to the UDP-glycosyltransferase family.

The polypeptide is UDP-glycosyltransferase 79B3 (UGT79B3) (Arabidopsis thaliana (Mouse-ear cress)).